The following is a 419-amino-acid chain: DNA ligase (419 aa).

Residues 1–120 are NTD; the sequence is MLNQFPGQYS…ARQKRGAHTN (120 aa). The segment at 121–317 is AD domain; the sequence is RGMIPPMLVK…NYHSAHLAKL (197 aa). ATP is bound by residues glutamine 149, lysine 151, glutamate 203, and phenylalanine 232. Lysine 151 (N6-AMP-lysine intermediate) is an active-site residue. Glutamate 203 provides a ligand contact to a divalent metal cation. Residue glutamate 291 coordinates a divalent metal cation. Positions 294 and 316 each coordinate ATP. The tract at residues 318-419 is OB domain; that stretch reads KPLLDAEFIL…REPINVLEII (102 aa).

Belongs to the ATP-dependent DNA ligase family. It depends on a divalent metal cation as a cofactor.

Its subcellular location is the virion. The enzyme catalyses ATP + (deoxyribonucleotide)n-3'-hydroxyl + 5'-phospho-(deoxyribonucleotide)m = (deoxyribonucleotide)n+m + AMP + diphosphate.. In terms of biological role, very low-fidelity DNA ligase that seals nicks in double-stranded DNA during DNA repair. Together with the viral repair DNA polymerase X, fills the single nucleotide gaps generated by the AP endonuclease. It is not essential for viral replication and recombination. Displays a very low adenylation activity towards DNA with 3'-dideoxy- or 3'-amino-terminated nicks compared to regular nick DNA. The protein is DNA ligase (LIG) of Ornithodoros (relapsing fever ticks).